Consider the following 148-residue polypeptide: 3-dehydroquinate dehydratase (148 aa).

Tyrosine 23 acts as the Proton acceptor in catalysis. Residues asparagine 74, histidine 80, and aspartate 87 each coordinate substrate. Catalysis depends on histidine 100, which acts as the Proton donor. Residues 101-102 (IS) and arginine 111 contribute to the substrate site.

Belongs to the type-II 3-dehydroquinase family. In terms of assembly, homododecamer.

The enzyme catalyses 3-dehydroquinate = 3-dehydroshikimate + H2O. It functions in the pathway metabolic intermediate biosynthesis; chorismate biosynthesis; chorismate from D-erythrose 4-phosphate and phosphoenolpyruvate: step 3/7. Catalyzes a trans-dehydration via an enolate intermediate. The chain is 3-dehydroquinate dehydratase from Anoxybacillus flavithermus (strain DSM 21510 / WK1).